The chain runs to 209 residues: Cytochrome bo(3) ubiquinol oxidase subunit 3 (209 aa).

Over 1–29 (MSTAVLNKHLADAHEVGHDHDHAHDSGGN) the chain is Cytoplasmic. A helical membrane pass occupies residues 30-50 (TVFGFWLYLMTDCVLFASVFA). The Periplasmic portion of the chain corresponds to 51–72 (TYAVLVHHTAGGPSGKDIFELP). Residues 73 to 93 (YVLVETAILLVSSCTYGLAML) form a helical membrane-spanning segment. At 94–102 (SAHKGAKGQ) the chain is on the cytoplasmic side. A helical transmembrane segment spans residues 103–123 (AIAWLGVTFLLGAAFIGMEIN). The Periplasmic portion of the chain corresponds to 124 to 143 (EFHHLIAEGFGPSRSAFLSS). Residues 144 to 164 (FFTLVGMHGLHVSAGLLWMLV) form a helical membrane-spanning segment. At 165–186 (LMAQIWTRGLTAQNNTRMMCLS) the chain is on the cytoplasmic side. Residues 187–207 (LFWHFLDIVWICVFTVVYLMG) traverse the membrane as a helical segment. Topologically, residues 208 to 209 (AL) are periplasmic.

It belongs to the cytochrome c oxidase subunit 3 family. As to quaternary structure, heterooctamer of two A chains, two B chains, two C chains and two D chains.

The protein localises to the cell inner membrane. Functionally, cytochrome bo(3) ubiquinol terminal oxidase is the component of the aerobic respiratory chain of E.coli that predominates when cells are grown at high aeration. Has proton pump activity across the membrane in addition to electron transfer, pumping 2 protons/electron. This Pseudomonas aeruginosa (strain ATCC 15692 / DSM 22644 / CIP 104116 / JCM 14847 / LMG 12228 / 1C / PRS 101 / PAO1) protein is Cytochrome bo(3) ubiquinol oxidase subunit 3 (cyoC).